A 337-amino-acid polypeptide reads, in one-letter code: Ketol-acid reductoisomerase (NADP(+)) (337 aa).

The KARI N-terminal Rossmann domain maps to 3–183 (VEMFYDDDAD…GGARAGVIKT (181 aa)). NADP(+) is bound by residues 26–29 (YGSQ), lysine 49, serine 52, serine 54, and 84–87 (DTAQ). Histidine 109 is a catalytic residue. An NADP(+)-binding site is contributed by glycine 135. The KARI C-terminal knotted domain maps to 184–329 (TFKEETETDL…KKLRDLMSWV (146 aa)). Positions 192, 196, 228, and 232 each coordinate Mg(2+). Substrate is bound at residue serine 253.

This sequence belongs to the ketol-acid reductoisomerase family. The cofactor is Mg(2+).

The enzyme catalyses (2R)-2,3-dihydroxy-3-methylbutanoate + NADP(+) = (2S)-2-acetolactate + NADPH + H(+). It carries out the reaction (2R,3R)-2,3-dihydroxy-3-methylpentanoate + NADP(+) = (S)-2-ethyl-2-hydroxy-3-oxobutanoate + NADPH + H(+). It functions in the pathway amino-acid biosynthesis; L-isoleucine biosynthesis; L-isoleucine from 2-oxobutanoate: step 2/4. The protein operates within amino-acid biosynthesis; L-valine biosynthesis; L-valine from pyruvate: step 2/4. In terms of biological role, involved in the biosynthesis of branched-chain amino acids (BCAA). Catalyzes an alkyl-migration followed by a ketol-acid reduction of (S)-2-acetolactate (S2AL) to yield (R)-2,3-dihydroxy-isovalerate. In the isomerase reaction, S2AL is rearranged via a Mg-dependent methyl migration to produce 3-hydroxy-3-methyl-2-ketobutyrate (HMKB). In the reductase reaction, this 2-ketoacid undergoes a metal-dependent reduction by NADPH to yield (R)-2,3-dihydroxy-isovalerate. The sequence is that of Ketol-acid reductoisomerase (NADP(+)) from Rhodococcus opacus (strain B4).